Here is a 412-residue protein sequence, read N- to C-terminus: Translation initiation factor 2 subunit gamma (412 aa).

In terms of domain architecture, tr-type G spans 7-203 (QPEVNIGLVG…AIESEIPTPD (197 aa)). Positions 16-23 (GHVDHGKT) are G1. Mg(2+) contacts are provided by Asp19, Thr23, Gly44, and Ser46. 19-24 (DHGKTT) is a binding site for GTP. The segment at 44-48 (GISIR) is G2. The interval 90-93 (DAPG) is G3. Residues 146-149 (NKVD) and 181-183 (SAQ) contribute to the GTP site. The G4 stretch occupies residues 146 to 149 (NKVD). The interval 181 to 183 (SAQ) is G5.

The protein belongs to the TRAFAC class translation factor GTPase superfamily. Classic translation factor GTPase family. EIF2G subfamily. In terms of assembly, heterotrimer composed of an alpha, a beta and a gamma chain. It depends on Mg(2+) as a cofactor.

It catalyses the reaction GTP + H2O = GDP + phosphate + H(+). EIF-2 functions in the early steps of protein synthesis by forming a ternary complex with GTP and initiator tRNA. This is Translation initiation factor 2 subunit gamma from Halorubrum lacusprofundi (strain ATCC 49239 / DSM 5036 / JCM 8891 / ACAM 34).